We begin with the raw amino-acid sequence, 716 residues long: Phosphoribosylformylglycinamidine synthase subunit PurL (716 aa).

Residue His34 is part of the active site. Tyr37 serves as a coordination point for ATP. Glu78 provides a ligand contact to Mg(2+). Substrate-binding positions include 79 to 82 and Arg101; that span reads SHNH. His80 functions as the Proton acceptor in the catalytic mechanism. Mg(2+) is bound at residue Asp102. Substrate is bound at residue Gln226. A Mg(2+)-binding site is contributed by Asp254. Residue 298–300 coordinates substrate; the sequence is ESQ. Residues Asp474 and Gly511 each contribute to the ATP site. Asn512 is a Mg(2+) binding site. Ser514 contributes to the substrate binding site.

The protein belongs to the FGAMS family. In terms of assembly, monomer. Part of the FGAM synthase complex composed of 1 PurL, 1 PurQ and 2 PurS subunits.

Its subcellular location is the cytoplasm. The enzyme catalyses N(2)-formyl-N(1)-(5-phospho-beta-D-ribosyl)glycinamide + L-glutamine + ATP + H2O = 2-formamido-N(1)-(5-O-phospho-beta-D-ribosyl)acetamidine + L-glutamate + ADP + phosphate + H(+). Its pathway is purine metabolism; IMP biosynthesis via de novo pathway; 5-amino-1-(5-phospho-D-ribosyl)imidazole from N(2)-formyl-N(1)-(5-phospho-D-ribosyl)glycinamide: step 1/2. Its function is as follows. Part of the phosphoribosylformylglycinamidine synthase complex involved in the purines biosynthetic pathway. Catalyzes the ATP-dependent conversion of formylglycinamide ribonucleotide (FGAR) and glutamine to yield formylglycinamidine ribonucleotide (FGAM) and glutamate. The FGAM synthase complex is composed of three subunits. PurQ produces an ammonia molecule by converting glutamine to glutamate. PurL transfers the ammonia molecule to FGAR to form FGAM in an ATP-dependent manner. PurS interacts with PurQ and PurL and is thought to assist in the transfer of the ammonia molecule from PurQ to PurL. The protein is Phosphoribosylformylglycinamidine synthase subunit PurL of Methanobrevibacter smithii (strain ATCC 35061 / DSM 861 / OCM 144 / PS).